Here is a 234-residue protein sequence, read N- to C-terminus: Chalcone--flavanone isomerase 1 (234 aa).

Positions 50, 115, and 192 each coordinate substrate.

It belongs to the chalcone isomerase family.

The catalysed reaction is a chalcone = a flavanone.. The protein operates within secondary metabolite biosynthesis; flavonoid biosynthesis. Its function is as follows. Catalyzes the intramolecular cyclization of bicyclic chalcones into tricyclic (S)-flavanones. Responsible for the isomerization of 4,2',4',6'-tetrahydroxychalcone (also termed chalcone) into naringenin. The polypeptide is Chalcone--flavanone isomerase 1 (CHI1) (Vitis vinifera (Grape)).